Consider the following 128-residue polypeptide: Protein yippee-like At3g08990 (128 aa).

Residues 12–109 (LVYSCKYCQT…LERFKVLGPY (98 aa)) enclose the Yippee domain. Cys-16, Cys-19, Cys-72, and Cys-75 together coordinate Zn(2+).

Belongs to the yippee family.

The chain is Protein yippee-like At3g08990 from Arabidopsis thaliana (Mouse-ear cress).